Consider the following 610-residue polypeptide: UvrABC system protein C (610 aa).

The 79-residue stretch at 16 to 94 folds into the GIY-YIG domain; the sequence is SQPGVYRMYD…IKLYQPRYNV (79 aa). The UVR domain occupies 204-239; the sequence is DQVLTQLISRMETASQNLEFEEAARIRDQIQAVRRV.

It belongs to the UvrC family. In terms of assembly, interacts with UvrB in an incision complex.

It is found in the cytoplasm. Its function is as follows. The UvrABC repair system catalyzes the recognition and processing of DNA lesions. UvrC both incises the 5' and 3' sides of the lesion. The N-terminal half is responsible for the 3' incision and the C-terminal half is responsible for the 5' incision. This is UvrABC system protein C from Escherichia coli (strain UTI89 / UPEC).